We begin with the raw amino-acid sequence, 146 residues long: Hemoglobin subunit beta (146 aa).

Positions 2–146 (HWSAEEKQLI…VAHALARKYH (145 aa)) constitute a Globin domain. Residues His63 and His92 each contribute to the heme b site.

Belongs to the globin family. In terms of assembly, heterotetramer of two alpha chains and two beta chains. Red blood cells.

Functionally, involved in oxygen transport from the lung to the various peripheral tissues. This Streptopelia orientalis (Eastern turtle dove) protein is Hemoglobin subunit beta (HBB).